A 166-amino-acid chain; its full sequence is NADPH-dependent 7-cyano-7-deazaguanine reductase (166 aa).

Cysteine 57 acts as the Thioimide intermediate in catalysis. Aspartate 64 functions as the Proton donor in the catalytic mechanism. Substrate is bound by residues 79 to 81 (VES) and 98 to 99 (HE).

The protein belongs to the GTP cyclohydrolase I family. QueF type 1 subfamily.

It is found in the cytoplasm. The enzyme catalyses 7-aminomethyl-7-carbaguanine + 2 NADP(+) = 7-cyano-7-deazaguanine + 2 NADPH + 3 H(+). It participates in tRNA modification; tRNA-queuosine biosynthesis. Catalyzes the NADPH-dependent reduction of 7-cyano-7-deazaguanine (preQ0) to 7-aminomethyl-7-deazaguanine (preQ1). This Staphylococcus saprophyticus subsp. saprophyticus (strain ATCC 15305 / DSM 20229 / NCIMB 8711 / NCTC 7292 / S-41) protein is NADPH-dependent 7-cyano-7-deazaguanine reductase.